The chain runs to 468 residues: Acetyl-CoA decarbonylase/synthase complex subunit gamma 2 (468 aa).

The 60-residue stretch at 1 to 60 (MKINSPLEAYKYLPQTNCGECGEATCMAFASKLIDRSGKPTQCPPLVKEKKFAKKLAELE) folds into the 4Fe-4S domain. [4Fe-4S] cluster is bound by residues C18, C21, C26, and C43.

As to quaternary structure, heterodimer of delta and gamma chains. The ACDS complex is made up of alpha, epsilon, beta, gamma and delta chains with a probable stoichiometry of (alpha(2)epsilon(2))(4)-beta(8)-(gamma(1)delta(1))(8). Corrinoid is required as a cofactor. [4Fe-4S] cluster serves as cofactor.

The catalysed reaction is 5,6,7,8-tetrahydrosarcinapterin + methyl-Co(III)-[corrinoid Fe-S protein] = 5-methyltetrahydrosarcinapterin + Co(I)-[corrinoid Fe-S protein] + H(+). Its pathway is one-carbon metabolism; methanogenesis from acetate. Part of a complex that catalyzes the reversible cleavage of acetyl-CoA, allowing growth on acetate as sole source of carbon and energy. This chain is Acetyl-CoA decarbonylase/synthase complex subunit gamma 2, found in Methanosarcina thermophila.